Here is a 316-residue protein sequence, read N- to C-terminus: Methionyl-tRNA formyltransferase (316 aa).

Glycine 111–proline 114 contributes to the (6S)-5,6,7,8-tetrahydrofolate binding site.

Belongs to the Fmt family.

It carries out the reaction L-methionyl-tRNA(fMet) + (6R)-10-formyltetrahydrofolate = N-formyl-L-methionyl-tRNA(fMet) + (6S)-5,6,7,8-tetrahydrofolate + H(+). Functionally, attaches a formyl group to the free amino group of methionyl-tRNA(fMet). The formyl group appears to play a dual role in the initiator identity of N-formylmethionyl-tRNA by promoting its recognition by IF2 and preventing the misappropriation of this tRNA by the elongation apparatus. This Chlamydia trachomatis serovar A (strain ATCC VR-571B / DSM 19440 / HAR-13) protein is Methionyl-tRNA formyltransferase.